The primary structure comprises 106 residues: Urease subunit beta (106 aa).

This sequence belongs to the urease beta subunit family. As to quaternary structure, heterotrimer of UreA (gamma), UreB (beta) and UreC (alpha) subunits. Three heterotrimers associate to form the active enzyme. The apoenzyme interacts with an accessory complex composed of UreD, UreF and UreG, which is required for the assembly of the nickel containing metallocenter of UreC. The UreE protein may also play a direct role as a metallochaperone in nickel transfer to the urease apoprotein.

The protein resides in the cytoplasm. It carries out the reaction urea + 2 H2O + H(+) = hydrogencarbonate + 2 NH4(+). The protein operates within nitrogen metabolism; urea degradation; CO(2) and NH(3) from urea (urease route): step 1/1. The apoenzyme can be activated in vitro in the presence of nickel ions and carbon dioxide, which promotes carboxylation of 'Lys-217' of the UreC (alpha) subunit. In Klebsiella aerogenes (Enterobacter aerogenes), this protein is Urease subunit beta.